A 446-amino-acid chain; its full sequence is Phosphoglucosamine mutase (446 aa).

Residue Ser-103 is the Phosphoserine intermediate of the active site. Residues Ser-103, Asp-242, Asp-244, and Asp-246 each contribute to the Mg(2+) site. Ser-103 carries the phosphoserine modification.

Belongs to the phosphohexose mutase family. It depends on Mg(2+) as a cofactor. In terms of processing, activated by phosphorylation.

The enzyme catalyses alpha-D-glucosamine 1-phosphate = D-glucosamine 6-phosphate. Catalyzes the conversion of glucosamine-6-phosphate to glucosamine-1-phosphate. This chain is Phosphoglucosamine mutase, found in Vibrio cholerae serotype O1 (strain ATCC 39315 / El Tor Inaba N16961).